A 269-amino-acid chain; its full sequence is Expansin-B9 (269 aa).

The first 24 residues, 1–24, serve as a signal peptide directing secretion; it reads MGSLTTNIVLAVAVVAALVGGGSC. The N-linked (GlcNAc...) asparagine glycan is linked to N34. The region spanning 63 to 169 is the Expansin-like EG45 domain; sequence GGACGIKNVN…RRVRCKYPGG (107 aa). Disulfide bonds link C66-C94, C97-C164, and C102-C108. The Expansin-like CBD domain occupies 183–264; that stretch reads NYLAVLVKFV…NWMPDAIYVS (82 aa).

It belongs to the expansin family. Expansin B subfamily.

It is found in the secreted. The protein localises to the cell wall. It localises to the membrane. Functionally, may cause loosening and extension of plant cell walls by disrupting non-covalent bonding between cellulose microfibrils and matrix glucans. No enzymatic activity has been found. May be required for rapid internodal elongation in deepwater rice during submergence. This is Expansin-B9 (EXPB9) from Oryza sativa subsp. japonica (Rice).